The following is a 275-amino-acid chain: Shikimate dehydrogenase (NADP(+)) (275 aa).

Shikimate contacts are provided by residues Ser-15–Ser-17 and Thr-62. Lys-66 serves as the catalytic Proton acceptor. Glu-78 provides a ligand contact to NADP(+). The shikimate site is built by Asn-87 and Asp-102. Residues Gly-128–Ala-132, Asn-151–Lys-156, and Leu-218 each bind NADP(+). Tyr-220 lines the shikimate pocket. An NADP(+)-binding site is contributed by Gly-241.

Belongs to the shikimate dehydrogenase family. In terms of assembly, homodimer.

It catalyses the reaction shikimate + NADP(+) = 3-dehydroshikimate + NADPH + H(+). The protein operates within metabolic intermediate biosynthesis; chorismate biosynthesis; chorismate from D-erythrose 4-phosphate and phosphoenolpyruvate: step 4/7. Involved in the biosynthesis of the chorismate, which leads to the biosynthesis of aromatic amino acids. Catalyzes the reversible NADPH linked reduction of 3-dehydroshikimate (DHSA) to yield shikimate (SA). In Shouchella clausii (strain KSM-K16) (Alkalihalobacillus clausii), this protein is Shikimate dehydrogenase (NADP(+)).